A 188-amino-acid chain; its full sequence is Threonylcarbamoyl-AMP synthase (188 aa).

A YrdC-like domain is found at 3–188 (QLSSTQVTPV…RSGLVLRNGQ (186 aa)).

The protein belongs to the SUA5 family. TsaC subfamily.

It is found in the cytoplasm. The catalysed reaction is L-threonine + hydrogencarbonate + ATP = L-threonylcarbamoyladenylate + diphosphate + H2O. In terms of biological role, required for the formation of a threonylcarbamoyl group on adenosine at position 37 (t(6)A37) in tRNAs that read codons beginning with adenine. Catalyzes the conversion of L-threonine, HCO(3)(-)/CO(2) and ATP to give threonylcarbamoyl-AMP (TC-AMP) as the acyladenylate intermediate, with the release of diphosphate. This chain is Threonylcarbamoyl-AMP synthase, found in Shewanella denitrificans (strain OS217 / ATCC BAA-1090 / DSM 15013).